The primary structure comprises 904 residues: MAESSESFTMASSPAQRRRGNDPLTSSPGRSSRRTDALTSSPGRDLPPFEDESEGLLGTEGPLEEEEDGEELIGDGMERDYRAIPELDAYEAEGLALDDEDVEELTASQREAAERAMRQRDREAGRGLGRMRRGLLYDSDEEDEERPARKRRQVERATEDGEEDEEMIESIENLEDLKGHSVREWVSMAGPRLEIHHRFKNFLRTHVDSHGHNVFKERISDMCKENRESLVVNYEDLAAREHVLAYFLPEAPAELLQIFDEAALEVVLAMYPKYDRITNHIHVRISHLPLVEELRSLRQLHLNQLIRTSGVVTSCTGVLPQLSMVKYNCNKCNFVLGPFCQSQNQEVKPGSCPECQSAGPFEVNMEETIYQNYQRIRIQESPGKVAAGRLPRSKDAILLADLVDSCKPGDEIELTGIYHNNYDGSLNTANGFPVFATVILANHVAKKDNKVAVGELTDEDVKMITSLSKDQQIGEKIFASIAPSIYGHEDIKRGLALALFGGEPKNPGGKHKVRGDINVLLCGDPGTAKSQFLKYIEKVSSRAIFTTGQGASAVGLTAYVQRHPVSREWTLEAGALVLADRGVCLIDEFDKMNDQDRTSIHEAMEQQSISISKAGIVTSLQARCTVIAAANPIGGRYDPSLTFSENVDLTEPIISRFDILCVVRDTVDPVQDEMLARFVVGSHVRHHPSNKEEEGLANGSAAEPAMPNTYGVEPLPQEVLKKYIIYAKERVHPKLNQMDQDKVAKMYSDLRKESMATGSIPITVRHIESMIRMAEAHARIHLRDYVIEDDVNMAIRVMLESFIDTQKFSVMRSMRKTFARYLSFRRDNNELLLFILKQLVAEQVTYQRNRFGAQQDTIEVPEKDLVDKARQINIHNLSAFYDSELFRMNKFSHDLKRKMILQQF.

Over residues 1-15 the composition is skewed to polar residues; the sequence is MAESSESFTMASSPA. The tract at residues 1–80 is disordered; that stretch reads MAESSESFTM…ELIGDGMERD (80 aa). Residue Ala-2 is modified to N-acetylalanine. Residues 2–257 are interaction with KAT7; the sequence is AESSESFTMA…LPEAPAELLQ (256 aa). Ser-12 and Ser-13 each carry phosphoserine. Thr-25 carries the phosphothreonine modification. Phosphoserine is present on residues Ser-26, Ser-27, and Ser-32. Thr-39 carries the post-translational modification Phosphothreonine. Ser-40 is subject to Phosphoserine; by CDC7. At Ser-41 the chain carries Phosphoserine. A Phosphoserine; by CDC7 modification is found at Ser-53. A Phosphothreonine modification is found at Thr-59. The segment at 61-130 is interaction with DNJC9; the sequence is GPLEEEEDGE…DREAGRGLGR (70 aa). Positions 62 to 73 are enriched in acidic residues; sequence PLEEEEDGEELI. Ser-108 is modified (phosphoserine; by ATR). The interval 109–167 is disordered; it reads QREAAERAMRQRDREAGRGLGRMRRGLLYDSDEEDEERPARKRRQVERATEDGEEDEEM. The segment covering 111-125 has biased composition (basic and acidic residues); sequence EAAERAMRQRDREAG. Residue Tyr-137 is modified to Phosphotyrosine. Ser-139 carries the post-translational modification Phosphoserine. Lys-178 is covalently cross-linked (Glycyl lysine isopeptide (Lys-Gly) (interchain with G-Cter in SUMO2)). At Lys-216 the chain carries N6-acetyllysine. The C4-type zinc-finger motif lies at 329 to 355; that stretch reads CNKCNFVLGPFCQSQNQEVKPGSCPEC. Ser-381 and Ser-484 each carry phosphoserine. An MCM domain is found at 473-679; it reads IGEKIFASIA…VQDEMLARFV (207 aa). Residues Ser-530 and Gln-531 each coordinate ADP. The short motif at 655–658 is the Arginine finger element; sequence SRFD. The segment at 686–705 is disordered; the sequence is HHPSNKEEEGLANGSAAEPA.

Belongs to the MCM family. As to quaternary structure, component of the MCM2-7 complex. The complex forms a toroidal hexameric ring with the proposed subunit order MCM2-MCM6-MCM4-MCM7-MCM3-MCM5. Component of the CMG helicase complex, a hexameric ring of related MCM2-7 subunits stabilized by CDC45 and the tetrameric GINS complex. Interacts with DBF4. Interacts with KAT7. May interact with MCM10. Component of the replisome complex composed of at least DONSON, MCM2, MCM7, PCNA and TICRR. Forms a co-chaperone complex with DNAJC9 and histone H3.3-H4 heterodimers. Within the complex, interacts (via N-terminus) with DNAJC9 (via C-terminus); the interaction is histone-dependent. Interacts with histones H3.1 and H3.3. Interacts with AGER/RAGE; the interaction is increased following DNA replication stress and stabilizes the MCM2-7 complex at replication forks. In terms of processing, phosphorylated on Ser-108 by ATR in proliferating cells. Ser-108 proliferation is increased by genotoxic agents. Ser-40 is mediated by the CDC7-DBF4 and CDC7-DBF4B complexes, while Ser-53 phosphorylation is only mediated by the CDC7-DBF4 complex. Phosphorylation by the CDC7-DBF4 complex during G1/S phase is required for the initiation of DNA replication.

It is found in the nucleus. The protein resides in the chromosome. The catalysed reaction is ATP + H2O = ADP + phosphate + H(+). In terms of biological role, acts as a component of the MCM2-7 complex (MCM complex) which is the replicative helicase essential for 'once per cell cycle' DNA replication initiation and elongation in eukaryotic cells. Core component of CDC45-MCM-GINS (CMG) helicase, the molecular machine that unwinds template DNA during replication, and around which the replisome is built. The active ATPase sites in the MCM2-7 ring are formed through the interaction surfaces of two neighboring subunits such that a critical structure of a conserved arginine finger motif is provided in trans relative to the ATP-binding site of the Walker A box of the adjacent subunit. The six ATPase active sites, however, are likely to contribute differentially to the complex helicase activity. Required for the entry in S phase and for cell division. Plays a role in terminally differentiated hair cells development of the cochlea and induces cells apoptosis. This is DNA replication licensing factor MCM2 from Homo sapiens (Human).